The primary structure comprises 295 residues: Shikimate dehydrogenase (NADP(+)) (295 aa).

Shikimate-binding positions include 21-23 and T68; that span reads SLS. Residue K72 is the Proton acceptor of the active site. The shikimate site is built by N93 and D108. Residues 132–136, 156–161, and L228 each bind NADP(+); these read GAGGA and NRTPER. Residue Y230 participates in shikimate binding. G251 lines the NADP(+) pocket.

Belongs to the shikimate dehydrogenase family. In terms of assembly, homodimer.

It catalyses the reaction shikimate + NADP(+) = 3-dehydroshikimate + NADPH + H(+). The protein operates within metabolic intermediate biosynthesis; chorismate biosynthesis; chorismate from D-erythrose 4-phosphate and phosphoenolpyruvate: step 4/7. Functionally, involved in the biosynthesis of the chorismate, which leads to the biosynthesis of aromatic amino acids. Catalyzes the reversible NADPH linked reduction of 3-dehydroshikimate (DHSA) to yield shikimate (SA). This is Shikimate dehydrogenase (NADP(+)) from Moorella thermoacetica (strain ATCC 39073 / JCM 9320).